Consider the following 460-residue polypeptide: ATP synthase subunit beta (460 aa).

150–157 is a binding site for ATP; that stretch reads GGAGVGKT.

The protein belongs to the ATPase alpha/beta chains family. F-type ATPases have 2 components, CF(1) - the catalytic core - and CF(0) - the membrane proton channel. CF(1) has five subunits: alpha(3), beta(3), gamma(1), delta(1), epsilon(1). CF(0) has three main subunits: a(1), b(2) and c(9-12). The alpha and beta chains form an alternating ring which encloses part of the gamma chain. CF(1) is attached to CF(0) by a central stalk formed by the gamma and epsilon chains, while a peripheral stalk is formed by the delta and b chains.

Its subcellular location is the cell inner membrane. It catalyses the reaction ATP + H2O + 4 H(+)(in) = ADP + phosphate + 5 H(+)(out). Functionally, produces ATP from ADP in the presence of a proton gradient across the membrane. The catalytic sites are hosted primarily by the beta subunits. This Yersinia pestis bv. Antiqua (strain Angola) protein is ATP synthase subunit beta.